Reading from the N-terminus, the 318-residue chain is Myoblast determination protein 1 (318 aa).

Residue Met-1 forms a Peptide (Met-Gly) (interchain with G-Cter in ubiquitin) linkage. Lys-104 is subject to N6-methyllysine; by EHMT2. Residues 109 to 160 enclose the bHLH domain; it reads DRRKAATMRERRRLSKVNEAFETLKRCTSSNPNQRLPKVEILRNAIRYIEGL. Disordered stretches follow at residues 175-224 and 262-318; these read AAFY…RQNG and SPAA…YQVL. A compositionally biased stretch (polar residues) spans 196–206; that stretch reads SDASSPRSNCS. Positions 262–271 are enriched in low complexity; it reads SPAAPSLLLP. Residues 272–282 show a composition bias toward pro residues; the sequence is DAPPESPPGPP. Polar residues predominate over residues 290-304; it reads AEQGTQTPSPDSTPQ.

Efficient DNA binding requires dimerization with another bHLH protein. Seems to form active heterodimers with ITF-2. Interacts with SUV39H1. Interacts with DDX5. Interacts with CHD2. Interacts with TSC22D3. Interacts with SETD3. Interacts with P-TEFB complex; promotes the transcriptional activity of MYOD1 through its CDK9-mediated phosphorylation. Interacts with CSRP3. Interacts with NUPR1. Post-translationally, phosphorylated by CDK9. This phosphorylation promotes its function in muscle differentiation. In terms of processing, acetylated by a complex containing EP300 and PCAF. The acetylation is essential to activate target genes. Conversely, its deacetylation by SIRT1 inhibits its function. Ubiquitinated on the N-terminus; which is required for proteasomal degradation. Post-translationally, methylation at Lys-104 by EHMT2/G9a inhibits myogenic activity.

The protein resides in the nucleus. Its function is as follows. Acts as a transcriptional activator that promotes transcription of muscle-specific target genes and plays a role in muscle differentiation. Together with MYF5 and MYOG, co-occupies muscle-specific gene promoter core region during myogenesis. Induces fibroblasts to differentiate into myoblasts. Interacts with and is inhibited by the twist protein. This interaction probably involves the basic domains of both proteins. This chain is Myoblast determination protein 1 (Myod1), found in Rattus norvegicus (Rat).